We begin with the raw amino-acid sequence, 423 residues long: Cytochrome c biogenesis protein Ccs1 (423 aa).

3 consecutive transmembrane segments (helical) span residues 11–31 (LKFA…GSII), 70–90 (NFWF…CTFF), and 153–173 (IAPV…IFAS).

This sequence belongs to the Ccs1/CcsB family. As to quaternary structure, may interact with CcsA.

The protein resides in the plastid. It localises to the chloroplast thylakoid membrane. Required during biogenesis of c-type cytochromes (cytochrome c6 and cytochrome f) at the step of heme attachment. The protein is Cytochrome c biogenesis protein Ccs1 of Heterosigma akashiwo (strain NIES-293 / 8280G21-1).